A 379-amino-acid polypeptide reads, in one-letter code: Mannitol-1-phosphate 5-dehydrogenase (379 aa).

3–14 (AVHFGAGNIGRG) provides a ligand contact to NAD(+).

This sequence belongs to the mannitol dehydrogenase family.

The enzyme catalyses D-mannitol 1-phosphate + NAD(+) = beta-D-fructose 6-phosphate + NADH + H(+). The protein is Mannitol-1-phosphate 5-dehydrogenase of Anoxybacillus flavithermus (strain DSM 21510 / WK1).